The following is a 338-amino-acid chain: Glycerol-3-phosphate dehydrogenase [NAD(P)+] (338 aa).

NADPH contacts are provided by Ser11, Trp12, His32, Arg33, and Lys106. Lys106, Gly137, and Ser139 together coordinate sn-glycerol 3-phosphate. Ala141 contributes to the NADPH binding site. The sn-glycerol 3-phosphate site is built by Lys192, Asp245, Ser255, Arg256, and Asn257. The Proton acceptor role is filled by Lys192. Arg256 provides a ligand contact to NADPH. NADPH contacts are provided by Val280 and Glu282.

It belongs to the NAD-dependent glycerol-3-phosphate dehydrogenase family.

It localises to the cytoplasm. It catalyses the reaction sn-glycerol 3-phosphate + NAD(+) = dihydroxyacetone phosphate + NADH + H(+). It carries out the reaction sn-glycerol 3-phosphate + NADP(+) = dihydroxyacetone phosphate + NADPH + H(+). It functions in the pathway membrane lipid metabolism; glycerophospholipid metabolism. Catalyzes the reduction of the glycolytic intermediate dihydroxyacetone phosphate (DHAP) to sn-glycerol 3-phosphate (G3P), the key precursor for phospholipid synthesis. The protein is Glycerol-3-phosphate dehydrogenase [NAD(P)+] of Lysinibacillus sphaericus (strain C3-41).